A 620-amino-acid polypeptide reads, in one-letter code: Glutathione-regulated potassium-efflux system protein KefC (620 aa).

12 consecutive transmembrane segments (helical) span residues 4-24 (HTLIQALIYLGSAALIVPVAV), 26-46 (LGLGSVLGYLIAGGLIGPWGL), 54-74 (AILHFAEIGVVLMLFVIGLEL), 86-106 (VFGGGALQMGACGLLLGGFCV), 114-134 (VALLIGLTLALSSTAIAMQAM), 149-169 (FAVLLFQDIAAIPLVAMIPLL), 178-198 (ASAFFLSALKVVGALALVVLL), 218-238 (VFSAVALFLVFGFGLLLEEAG), 271-291 (LLLGLFFIGVGMSIDFGTLVA), 296-316 (VLTLLFGFLIIKTVTLWLVAK), 326-346 (RWFAVLLGQGSEFAFVIFGAA), and 359-379 (ALTLAVALSMAATPLLLVLLT). The 120-residue stretch at 399-518 (QPRVIIAGFG…AGVAQPERET (120 aa)) folds into the RCK N-terminal domain. The segment at 596-620 (HGWQGTREGKHTGNDADEPEVKPQP) is disordered.

Belongs to the monovalent cation:proton antiporter 2 (CPA2) transporter (TC 2.A.37) family. KefC subfamily. Homodimer. Interacts with the regulatory subunit KefF.

Its subcellular location is the cell inner membrane. Functionally, pore-forming subunit of a potassium efflux system that confers protection against electrophiles. Catalyzes K(+)/H(+) antiport. The protein is Glutathione-regulated potassium-efflux system protein KefC of Cronobacter sakazakii (strain ATCC BAA-894) (Enterobacter sakazakii).